The sequence spans 418 residues: Secreted aspartic protease 6 (418 aa).

The signal sequence occupies residues 1–18; that stretch reads MFLKNILSVLRFALLIDA. Positions 19–76 are cleaved as a propeptide — activation peptide; the sequence is APVKRSPGFVTLDFNVKRSLVVPDDPTAESKRSPLFLDLDPTQIPVDDTGRNVGVDKR. In terms of domain architecture, Peptidase A1 spans 90–404; sequence YSADITVGSN…DLDDKKISMA (315 aa). Asp-108 is an active-site residue. 108-110 contributes to the pepstatin A binding site; that stretch reads DTG. Cys-123 and Cys-135 are joined by a disulfide. N-linked (GlcNAc...) asparagine glycosylation is present at Asn-138. Asp-268 contributes to the Zn(2+) binding site. Asp-294 is an active-site residue. 294 to 298 provides a ligand contact to pepstatin A; sequence DSGTT. The cysteines at positions 332 and 370 are disulfide-linked.

Belongs to the peptidase A1 family.

The protein resides in the secreted. It carries out the reaction Preferential cleavage at the carboxyl of hydrophobic amino acids, but fails to cleave 15-Leu-|-Tyr-16, 16-Tyr-|-Leu-17 and 24-Phe-|-Phe-25 of insulin B chain. Activates trypsinogen, and degrades keratin.. Inhibited by pepstatin A analogs. In terms of biological role, secreted aspartic peptidases (SAPs) are a group of ten acidic hydrolases considered as key virulence factors. These enzymes supply the fungus with nutrient amino acids as well as are able to degrade the selected host's proteins involved in the immune defense. Moreover, acts toward human hemoglobin though limited proteolysis to generate a variety of antimicrobial hemocidins, enabling to compete with the other microorganisms of the same physiological niche using the microbicidal peptides generated from the host protein. The chain is Secreted aspartic protease 6 from Candida albicans (Yeast).